Here is a 344-residue protein sequence, read N- to C-terminus: Probable dual-specificity RNA methyltransferase RlmN (344 aa).

Glu92 functions as the Proton acceptor in the catalytic mechanism. Positions 98 to 325 (DEDRATLCVS…TTIRASRGED (228 aa)) constitute a Radical SAM core domain. A disulfide bond links Cys105 and Cys330. Residues Cys112, Cys116, and Cys119 each coordinate [4Fe-4S] cluster. S-adenosyl-L-methionine-binding positions include 157–158 (GE), Ser189, 211–213 (SLH), and His287. Cys330 acts as the S-methylcysteine intermediate in catalysis.

It belongs to the radical SAM superfamily. RlmN family. [4Fe-4S] cluster serves as cofactor.

The protein localises to the cytoplasm. The catalysed reaction is adenosine(2503) in 23S rRNA + 2 reduced [2Fe-2S]-[ferredoxin] + 2 S-adenosyl-L-methionine = 2-methyladenosine(2503) in 23S rRNA + 5'-deoxyadenosine + L-methionine + 2 oxidized [2Fe-2S]-[ferredoxin] + S-adenosyl-L-homocysteine. The enzyme catalyses adenosine(37) in tRNA + 2 reduced [2Fe-2S]-[ferredoxin] + 2 S-adenosyl-L-methionine = 2-methyladenosine(37) in tRNA + 5'-deoxyadenosine + L-methionine + 2 oxidized [2Fe-2S]-[ferredoxin] + S-adenosyl-L-homocysteine. Specifically methylates position 2 of adenine 2503 in 23S rRNA and position 2 of adenine 37 in tRNAs. This is Probable dual-specificity RNA methyltransferase RlmN from Bacteroides fragilis (strain ATCC 25285 / DSM 2151 / CCUG 4856 / JCM 11019 / LMG 10263 / NCTC 9343 / Onslow / VPI 2553 / EN-2).